We begin with the raw amino-acid sequence, 1227 residues long: Methionine synthase (1227 aa).

The region spanning 2-325 (SSKVEQLRAQ…QHIAAMSRAV (324 aa)) is the Hcy-binding domain. The Zn(2+) site is built by cysteine 247, cysteine 310, and cysteine 311. In terms of domain architecture, Pterin-binding spans 356–617 (FVNVGERTNV…LPAELRDAVE (262 aa)). Positions 650–744 (QQAEWRSWEV…FIEASKEQGK (95 aa)) constitute a B12-binding N-terminal domain. Residues glutamate 694, 756-760 (GDVHD), histidine 759, serine 804, threonine 808, and alanine 860 contribute to the methylcob(III)alamin site. Positions 746-881 (NGKMVIATVK…SDTQRDDFVA (136 aa)) constitute a B12-binding domain. In terms of domain architecture, AdoMet activation spans 897 to 1227 (KKPRTPPVTL…LAPNLGYDAD (331 aa)). Residues aspartate 946, arginine 1134, and 1189 to 1190 (YY) contribute to the S-adenosyl-L-methionine site.

Belongs to the vitamin-B12 dependent methionine synthase family. Methylcob(III)alamin is required as a cofactor. Zn(2+) serves as cofactor.

The catalysed reaction is (6S)-5-methyl-5,6,7,8-tetrahydrofolate + L-homocysteine = (6S)-5,6,7,8-tetrahydrofolate + L-methionine. It functions in the pathway amino-acid biosynthesis; L-methionine biosynthesis via de novo pathway; L-methionine from L-homocysteine (MetH route): step 1/1. Catalyzes the transfer of a methyl group from methyl-cobalamin to homocysteine, yielding enzyme-bound cob(I)alamin and methionine. Subsequently, remethylates the cofactor using methyltetrahydrofolate. This Escherichia coli (strain K12) protein is Methionine synthase (metH).